A 1545-amino-acid chain; its full sequence is Dual oxidase 2 (1545 aa).

A signal peptide spans 1 to 25; the sequence is MLCIRPEALVLLGALLTVPLDPVGG. Over 26-601 the chain is Extracellular; it reads QDALSLTWEV…EGSGPGFGIT (576 aa). The interval 30 to 596 is peroxidase-like; mediates peroxidase activity; it reads SLTWEVQRYD…VIQYFEGSGP (567 aa). Residues Asn100, Asn312, Asn348, Asn358, Asn455, and Asn549 are each glycosylated (N-linked (GlcNAc...) asparagine). The cysteines at positions 124 and 1159 are disulfide-linked. A helical transmembrane segment spans residues 602–622; it reads IVALCCLPLMSLLISGVVAYF. The Cytoplasmic segment spans residues 623–1037; the sequence is RSRERKKLQK…YKRFVENYRR (415 aa). 3 EF-hand domains span residues 819–854, 855–890, and 899–934; these read PQDMFVESMFSLADKDGNGYLSFREFLDVLVVFMKG, SPEDKSRLMFTMYDLDGNGFLSKDEFFTMIRSFIEI, and QLTEVVESMFREAGFQDKQELTWEDFHFMLRDHDSE. Ca(2+) contacts are provided by Asp832, Asp834, Asn836, Tyr838, Glu843, Asp868, Asp870, Asn872, and Glu879. Residues 960–1242 form an interaction with TXNDC11 region; sequence RVSFIIRTPE…GSFALIQLPR (283 aa). Residues 1038 to 1058 traverse the membrane as a helical segment; sequence HIVCVAIFSAICAGLFVERAY. Residues 1059 to 1074 are Extracellular-facing; sequence YYAFVSPPSGIAETTF. The chain crosses the membrane as a helical span at residues 1075 to 1097; it reads VGIILSRGTAASVSFMFSYILLT. The 183-residue stretch at 1081–1263 folds into the Ferric oxidoreductase domain; the sequence is RGTAASVSFM…YVGDKLVSLS (183 aa). The Cytoplasmic segment spans residues 1098-1125; sequence MCRNLITFLRETFLNHYVPFDAAVDFHR. A helical transmembrane segment spans residues 1126–1148; that stretch reads WIAMAALVLAILHSVGHVVNVYI. The Extracellular portion of the chain corresponds to 1149–1182; it reads FSVSPLSLLACVFPSVFVNDGSKLPQKFYWWFFQ. A helical membrane pass occupies residues 1183–1203; the sequence is TIPGMTGVLLLVVLAIMYVFA. The Cytoplasmic portion of the chain corresponds to 1204–1220; sequence SPYFRRRSFRGFWLTHH. Residues 1221 to 1241 form a helical membrane-spanning segment; sequence FYILLYVLLIIHGSFALIQLP. Residue Arg1242 is a topological domain, extracellular. Residues 1243–1263 form a helical membrane-spanning segment; the sequence is FHIFFLVPALIYVGDKLVSLS. The FAD-binding FR-type domain occupies 1264–1370; that stretch reads RKKVEISVVK…DGPFGEGHQE (107 aa). Topologically, residues 1264-1545 are cytoplasmic; sequence RKKVEISVVK…THFVHHYENF (282 aa).

It in the N-terminal section; belongs to the peroxidase family. As to quaternary structure, heterodimer with DUOXA2; disulfide-linked. Interacts with TXNDC11, TPO and CYBA. In terms of processing, N-glycosylated. As to expression, expressed in thyroid, and the digestive tract especially in stomach, cecum and sigmoidal colon (at protein level). Expressed in thyroid.

It is found in the apical cell membrane. It localises to the cell junction. It carries out the reaction NADH + O2 + H(+) = H2O2 + NAD(+). It catalyses the reaction NADPH + O2 + H(+) = H2O2 + NADP(+). It participates in hormone biosynthesis; thyroid hormone biosynthesis. The NADPH oxidase activity is calcium-dependent. Peroxidase activity is inhibited by aminobenzohydrazide. In terms of biological role, generates hydrogen peroxide which is required for the activity of thyroid peroxidase/TPO and lactoperoxidase/LPO. Plays a role in thyroid hormones synthesis and lactoperoxidase-mediated antimicrobial defense at the surface of mucosa. May have its own peroxidase activity through its N-terminal peroxidase-like domain. In Sus scrofa (Pig), this protein is Dual oxidase 2 (DUOX2).